The chain runs to 405 residues: MQYTEIMVRYGELSTKGKNRRNFIDSLGRNVRKALHDFPELKVHANRDRMHIMLNGEDADKVMGRLKLVFGIQNFSPSIRVDADMDAVYETAIAMVKAQFKPGMTFKIYTRRSDHQFEYDTNQINDMLGGQILDHVDGIQVKMKNPDIVLRVEVRLNGIFLSSETIQGAGGLPVGTAGKGMLMLSGGIDSPVAGYLGMKRGVDMEMVHFFSPPYTSEQALAKAKQLASTLASYSGSVKFIQIPFTEIQEEIKEKVPEGYLMTVQRRLMMRLMDAITRQRHGKAIFNGESLGQVASQTMDSMIAINDVTTLPVLRPVISMDKTEIIKIAEDIDTYDLSIMPFEDCCTIFAPPAPKTHPKLDRSRSYEERIDVEGLMARALAGVKMTEIKPGENYLNTQEDVFAELL.

The region spanning 60–165 (DKVMGRLKLV…LNGIFLSSET (106 aa)) is the THUMP domain. ATP contacts are provided by residues 183 to 184 (ML), 208 to 209 (HF), R265, G287, and Q296.

This sequence belongs to the ThiI family.

The protein resides in the cytoplasm. The enzyme catalyses [ThiI sulfur-carrier protein]-S-sulfanyl-L-cysteine + a uridine in tRNA + 2 reduced [2Fe-2S]-[ferredoxin] + ATP + H(+) = [ThiI sulfur-carrier protein]-L-cysteine + a 4-thiouridine in tRNA + 2 oxidized [2Fe-2S]-[ferredoxin] + AMP + diphosphate. It catalyses the reaction [ThiS sulfur-carrier protein]-C-terminal Gly-Gly-AMP + S-sulfanyl-L-cysteinyl-[cysteine desulfurase] + AH2 = [ThiS sulfur-carrier protein]-C-terminal-Gly-aminoethanethioate + L-cysteinyl-[cysteine desulfurase] + A + AMP + 2 H(+). The protein operates within cofactor biosynthesis; thiamine diphosphate biosynthesis. Catalyzes the ATP-dependent transfer of a sulfur to tRNA to produce 4-thiouridine in position 8 of tRNAs, which functions as a near-UV photosensor. Also catalyzes the transfer of sulfur to the sulfur carrier protein ThiS, forming ThiS-thiocarboxylate. This is a step in the synthesis of thiazole, in the thiamine biosynthesis pathway. The sulfur is donated as persulfide by IscS. The sequence is that of Probable tRNA sulfurtransferase from Lactiplantibacillus plantarum (strain ATCC BAA-793 / NCIMB 8826 / WCFS1) (Lactobacillus plantarum).